A 505-amino-acid chain; its full sequence is MKRTPTAEEREREAKKLRLLEELEDTWLPYLTPKDDEFYQQWQLKYPKLILREASSVSEELHKEVQEAFLTMHKHGCLFRDLVRIQGKDLLTPVSRILIGNPGCTYKYLNTRLFTVPWPVKGSNIKHTEAEIAAACETFLKLNDYLQIETIQALEELAAKEKANEDTVPLCMSADFPRVGMGSSYNGQDEVDIKSRAAYNVTLLNFMDPQKMPYLKEEPYFGMGKMAVSWHHDENLVDRSAVAVYSYSCEGPEEESEDDSHLEGRDPDIWHVGFKISWDIETPGLAIPLHQGDCYFMLDDLNATHQHCVLAGSQPRFSSTHRVAECSTGTLDYILQRCQLAPQNVRDDVENDDVSLKSFEPAVLKQGEEIHNEVEFEWLRQFWFQGNRYRKCTDWWCQPMAQLEALWKKMEAVTNAVLHEVKREGLPVEQRNEILTAILASLTARQNLRREWHARCQSRIARTLPADQKPECRPYWEKDDVSMPLPFDLTDIVSELRGQLLEAKP.

Position 4 is a phosphothreonine (T4). A fe2OG dioxygenase domain region spans residues 32–327 (TPKDDEFYQQ…SSTHRVAECS (296 aa)). Residues R96 and Y108 each coordinate substrate. N205 contributes to the 2-oxoglutarate binding site. The segment at 213 to 224 (PYLKEEPYFGMG) is loop L1; predicted to block binding of double-stranded DNA or RNA. K216 is subject to N6-acetyllysine. Fe cation is bound by residues H231 and D233. 231–234 (HHDE) serves as a coordination point for substrate. Y295 contributes to the 2-oxoglutarate binding site. Position 307 (H307) interacts with Fe cation. 2-oxoglutarate is bound by residues 316–318 (RFS), T320, and R322.

It belongs to the fto family. In terms of assembly, monomer. May also exist as homodimer. Fe(2+) serves as cofactor.

It is found in the nucleus. The protein resides in the nucleus speckle. The protein localises to the cytoplasm. It carries out the reaction a 5'-end (N(7)-methyl 5'-triphosphoguanosine)-(N(6),2'-O-dimethyladenosine) in mRNA + 2-oxoglutarate + O2 = a 5'-end (N(7)-methyl 5'-triphosphoguanosine)-(2'-O-methyladenosine) in mRNA + formaldehyde + succinate + CO2. The enzyme catalyses an N(6)-methyladenosine in mRNA + 2-oxoglutarate + O2 = an adenosine in mRNA + formaldehyde + succinate + CO2. It catalyses the reaction N(6)-methyladenosine in U6 snRNA + 2-oxoglutarate + O2 = adenosine in U6 snRNA + formaldehyde + succinate + CO2. The catalysed reaction is a 5'-end (N(7)-methyl 5'-triphosphoguanosine)-(N(6),2'-O-dimethyladenosine) in U6 snRNA + 2-oxoglutarate + O2 = a 5'-end (N(7)-methyl 5'-triphosphoguanosine)-(2'-O-methyladenosine) in U6 snRNA + formaldehyde + succinate + CO2. It carries out the reaction an N(1)-methyladenosine in tRNA + 2-oxoglutarate + O2 = an adenosine in tRNA + formaldehyde + succinate + CO2. With respect to regulation, activated by ascorbate. Inhibited by N-oxalylglycine, fumarate and succinate. In terms of biological role, RNA demethylase that mediates oxidative demethylation of different RNA species, such as mRNAs, tRNAs and snRNAs, and acts as a regulator of fat mass, adipogenesis and energy homeostasis. Specifically demethylates N(6)-methyladenosine (m6A) RNA, the most prevalent internal modification of messenger RNA (mRNA) in higher eukaryotes. M6A demethylation by FTO affects mRNA expression and stability. Also able to demethylate m6A in U6 small nuclear RNA (snRNA). Mediates demethylation of N(6),2'-O-dimethyladenosine cap (m6A(m)), by demethylating the N(6)-methyladenosine at the second transcribed position of mRNAs and U6 snRNA. Demethylation of m6A(m) in the 5'-cap by FTO affects mRNA stability by promoting susceptibility to decapping. Also acts as a tRNA demethylase by removing N(1)-methyladenine from various tRNAs. Has no activity towards 1-methylguanine. Has no detectable activity towards double-stranded DNA. Also able to repair alkylated DNA and RNA by oxidative demethylation: demethylates single-stranded RNA containing 3-methyluracil, single-stranded DNA containing 3-methylthymine and has low demethylase activity towards single-stranded DNA containing 1-methyladenine or 3-methylcytosine. Ability to repair alkylated DNA and RNA is however unsure in vivo. Involved in the regulation of fat mass, adipogenesis and body weight, thereby contributing to the regulation of body size and body fat accumulation. Involved in the regulation of thermogenesis and the control of adipocyte differentiation into brown or white fat cells. Regulates activity of the dopaminergic midbrain circuitry via its ability to demethylate m6A in mRNAs. In Pongo abelii (Sumatran orangutan), this protein is Alpha-ketoglutarate-dependent dioxygenase FTO.